The sequence spans 172 residues: Adenine phosphoribosyltransferase (172 aa).

It belongs to the purine/pyrimidine phosphoribosyltransferase family. In terms of assembly, homodimer.

Its subcellular location is the cytoplasm. The enzyme catalyses AMP + diphosphate = 5-phospho-alpha-D-ribose 1-diphosphate + adenine. Its pathway is purine metabolism; AMP biosynthesis via salvage pathway; AMP from adenine: step 1/1. Its function is as follows. Catalyzes a salvage reaction resulting in the formation of AMP, that is energically less costly than de novo synthesis. In Prochlorococcus marinus (strain MIT 9303), this protein is Adenine phosphoribosyltransferase.